The chain runs to 1358 residues: Xanthine dehydrogenase (1358 aa).

The 90-residue stretch at 18–107 (NQLLFFLNGE…GMAVTTIEGL (90 aa)) folds into the 2Fe-2S ferredoxin-type domain. Cys-56, Cys-61, Cys-64, Cys-89, Cys-129, Cys-132, Cys-164, and Cys-166 together coordinate [2Fe-2S] cluster. Residues 253–447 (FTGSRVTWYT…ESVFIPYTRP (195 aa)) enclose the FAD-binding PCMH-type domain. FAD contacts are provided by residues 281-288 (IVVGNTEI), Phe-366, 376-380 (SIGGN), Asp-389, Leu-437, and Lys-455. 2 residues coordinate Mo-molybdopterin: Gln-805 and Phe-836. Positions 840 and 918 each coordinate substrate. Arg-950 contributes to the Mo-molybdopterin binding site. Residues Tyr-952 and Thr-1048 each contribute to the substrate site. Ala-1117 lines the Mo-molybdopterin pocket. Glu-1302 (proton acceptor) is an active-site residue.

This sequence belongs to the xanthine dehydrogenase family. As to quaternary structure, homodimer. It depends on FAD as a cofactor. The cofactor is Mo-molybdopterin. [2Fe-2S] cluster is required as a cofactor.

It localises to the peroxisome. The enzyme catalyses xanthine + NAD(+) + H2O = urate + NADH + H(+). It carries out the reaction hypoxanthine + NAD(+) + H2O = xanthine + NADH + H(+). Functionally, key enzyme in purine degradation. Catalyzes the oxidation of hypoxanthine to xanthine. Catalyzes the oxidation of xanthine to uric acid. The polypeptide is Xanthine dehydrogenase (xdh) (Dictyostelium discoideum (Social amoeba)).